The following is a 372-amino-acid chain: UDP-N-acetylglucosamine--N-acetylmuramyl-(pentapeptide) pyrophosphoryl-undecaprenol N-acetylglucosamine transferase (372 aa).

UDP-N-acetyl-alpha-D-glucosamine-binding positions include 14–16, Asn-128, Arg-169, Ser-201, Ile-257, and Gln-302; that span reads TGG.

This sequence belongs to the glycosyltransferase 28 family. MurG subfamily.

The protein resides in the cell inner membrane. The catalysed reaction is di-trans,octa-cis-undecaprenyl diphospho-N-acetyl-alpha-D-muramoyl-L-alanyl-D-glutamyl-meso-2,6-diaminopimeloyl-D-alanyl-D-alanine + UDP-N-acetyl-alpha-D-glucosamine = di-trans,octa-cis-undecaprenyl diphospho-[N-acetyl-alpha-D-glucosaminyl-(1-&gt;4)]-N-acetyl-alpha-D-muramoyl-L-alanyl-D-glutamyl-meso-2,6-diaminopimeloyl-D-alanyl-D-alanine + UDP + H(+). It functions in the pathway cell wall biogenesis; peptidoglycan biosynthesis. In terms of biological role, cell wall formation. Catalyzes the transfer of a GlcNAc subunit on undecaprenyl-pyrophosphoryl-MurNAc-pentapeptide (lipid intermediate I) to form undecaprenyl-pyrophosphoryl-MurNAc-(pentapeptide)GlcNAc (lipid intermediate II). This is UDP-N-acetylglucosamine--N-acetylmuramyl-(pentapeptide) pyrophosphoryl-undecaprenol N-acetylglucosamine transferase from Bacteroides thetaiotaomicron (strain ATCC 29148 / DSM 2079 / JCM 5827 / CCUG 10774 / NCTC 10582 / VPI-5482 / E50).